The chain runs to 261 residues: Tryptophan synthase alpha chain (261 aa).

Active-site proton acceptor residues include glutamate 49 and aspartate 60.

It belongs to the TrpA family. Tetramer of two alpha and two beta chains.

It catalyses the reaction (1S,2R)-1-C-(indol-3-yl)glycerol 3-phosphate + L-serine = D-glyceraldehyde 3-phosphate + L-tryptophan + H2O. The protein operates within amino-acid biosynthesis; L-tryptophan biosynthesis; L-tryptophan from chorismate: step 5/5. In terms of biological role, the alpha subunit is responsible for the aldol cleavage of indoleglycerol phosphate to indole and glyceraldehyde 3-phosphate. The polypeptide is Tryptophan synthase alpha chain (Roseiflexus castenholzii (strain DSM 13941 / HLO8)).